The sequence spans 217 residues: Adenylate kinase (217 aa).

Residue Gly10–Thr15 coordinates ATP. Residues Ser30–Val59 are NMP. AMP-binding positions include Thr31, Arg36, Gly57–Val59, Gly85–Arg88, and Gln92. An LID region spans residues Gly122–Asp159. ATP contacts are provided by residues Arg123 and Val132–Tyr133. AMP-binding residues include Arg156 and Arg167. An ATP-binding site is contributed by Arg202.

Belongs to the adenylate kinase family. As to quaternary structure, monomer.

The protein localises to the cytoplasm. It catalyses the reaction AMP + ATP = 2 ADP. The protein operates within purine metabolism; AMP biosynthesis via salvage pathway; AMP from ADP: step 1/1. Its function is as follows. Catalyzes the reversible transfer of the terminal phosphate group between ATP and AMP. Plays an important role in cellular energy homeostasis and in adenine nucleotide metabolism. The protein is Adenylate kinase of Acinetobacter baumannii (strain AB307-0294).